Reading from the N-terminus, the 310-residue chain is Methionyl-tRNA formyltransferase (310 aa).

(6S)-5,6,7,8-tetrahydrofolate is bound at residue 108-111 (SLLP).

This sequence belongs to the Fmt family.

It carries out the reaction L-methionyl-tRNA(fMet) + (6R)-10-formyltetrahydrofolate = N-formyl-L-methionyl-tRNA(fMet) + (6S)-5,6,7,8-tetrahydrofolate + H(+). Attaches a formyl group to the free amino group of methionyl-tRNA(fMet). The formyl group appears to play a dual role in the initiator identity of N-formylmethionyl-tRNA by promoting its recognition by IF2 and preventing the misappropriation of this tRNA by the elongation apparatus. The sequence is that of Methionyl-tRNA formyltransferase from Fusobacterium nucleatum subsp. nucleatum (strain ATCC 25586 / DSM 15643 / BCRC 10681 / CIP 101130 / JCM 8532 / KCTC 2640 / LMG 13131 / VPI 4355).